A 463-amino-acid polypeptide reads, in one-letter code: L-seryl-tRNA(Sec) selenium transferase (463 aa).

N6-(pyridoxal phosphate)lysine is present on Lys-295.

Belongs to the SelA family. Homodecamer; pentamer of dimers. Binds only one seryl-tRNA(Sec) per dimer. Pyridoxal 5'-phosphate serves as cofactor.

It is found in the cytoplasm. It catalyses the reaction L-seryl-tRNA(Sec) + selenophosphate + H(+) = L-selenocysteinyl-tRNA(Sec) + phosphate. The protein operates within aminoacyl-tRNA biosynthesis; selenocysteinyl-tRNA(Sec) biosynthesis; selenocysteinyl-tRNA(Sec) from L-seryl-tRNA(Sec) (bacterial route): step 1/1. Its function is as follows. Converts seryl-tRNA(Sec) to selenocysteinyl-tRNA(Sec) required for selenoprotein biosynthesis. The protein is L-seryl-tRNA(Sec) selenium transferase of Escherichia coli O127:H6 (strain E2348/69 / EPEC).